We begin with the raw amino-acid sequence, 669 residues long: UvrABC system protein B (669 aa).

A Helicase ATP-binding domain is found at 27–414 (ESLQGEHKFQ…EARVIEQVIR (388 aa)). 40–47 (GATGTGKT) is an ATP binding site. A Beta-hairpin motif is present at residues 93–116 (YYDYYQPEAYIPVTDTYIEKTASI). One can recognise a Helicase C-terminal domain in the interval 431–597 (QVDDLYGEIQ…PINKRANNAI (167 aa)). A UVR domain is found at 628–663 (PDLIQQLEEKMQEAAKKQEFEVAAIYRDRIQHLRDR).

It belongs to the UvrB family. As to quaternary structure, forms a heterotetramer with UvrA during the search for lesions. Interacts with UvrC in an incision complex.

Its subcellular location is the cytoplasm. In terms of biological role, the UvrABC repair system catalyzes the recognition and processing of DNA lesions. A damage recognition complex composed of 2 UvrA and 2 UvrB subunits scans DNA for abnormalities. Upon binding of the UvrA(2)B(2) complex to a putative damaged site, the DNA wraps around one UvrB monomer. DNA wrap is dependent on ATP binding by UvrB and probably causes local melting of the DNA helix, facilitating insertion of UvrB beta-hairpin between the DNA strands. Then UvrB probes one DNA strand for the presence of a lesion. If a lesion is found the UvrA subunits dissociate and the UvrB-DNA preincision complex is formed. This complex is subsequently bound by UvrC and the second UvrB is released. If no lesion is found, the DNA wraps around the other UvrB subunit that will check the other stand for damage. The chain is UvrABC system protein B from Synechocystis sp. (strain ATCC 27184 / PCC 6803 / Kazusa).